Here is a 230-residue protein sequence, read N- to C-terminus: Large ribosomal subunit protein uL1 (230 aa).

Belongs to the universal ribosomal protein uL1 family. In terms of assembly, part of the 50S ribosomal subunit.

Binds directly to 23S rRNA. The L1 stalk is quite mobile in the ribosome, and is involved in E site tRNA release. Its function is as follows. Protein L1 is also a translational repressor protein, it controls the translation of the L11 operon by binding to its mRNA. The chain is Large ribosomal subunit protein uL1 from Bradyrhizobium diazoefficiens (strain JCM 10833 / BCRC 13528 / IAM 13628 / NBRC 14792 / USDA 110).